Here is a 389-residue protein sequence, read N- to C-terminus: Chaperone protein DnaJ (389 aa).

The region spanning Asp6–Gly70 is the J domain. The CR-type zinc finger occupies Gly131–Arg213. Positions 144, 147, 161, 164, 187, 190, 201, and 204 each coordinate Zn(2+). CXXCXGXG motif repeat units lie at residues Cys144–Gly151, Cys161–Gly168, Cys187–Gly194, and Cys201–Gly208. The tract at residues Ser145–Thr167 is disordered. The tract at residues Leu351–Ser389 is disordered. Positions Lys355–Ser389 are enriched in basic and acidic residues.

This sequence belongs to the DnaJ family. In terms of assembly, homodimer. Zn(2+) is required as a cofactor.

The protein resides in the cytoplasm. Participates actively in the response to hyperosmotic and heat shock by preventing the aggregation of stress-denatured proteins and by disaggregating proteins, also in an autonomous, DnaK-independent fashion. Unfolded proteins bind initially to DnaJ; upon interaction with the DnaJ-bound protein, DnaK hydrolyzes its bound ATP, resulting in the formation of a stable complex. GrpE releases ADP from DnaK; ATP binding to DnaK triggers the release of the substrate protein, thus completing the reaction cycle. Several rounds of ATP-dependent interactions between DnaJ, DnaK and GrpE are required for fully efficient folding. Also involved, together with DnaK and GrpE, in the DNA replication of plasmids through activation of initiation proteins. In Methanosarcina mazei (strain ATCC BAA-159 / DSM 3647 / Goe1 / Go1 / JCM 11833 / OCM 88) (Methanosarcina frisia), this protein is Chaperone protein DnaJ.